Consider the following 187-residue polypeptide: Choriogonadotropin subunit beta variant 1 (187 aa).

The first 50 residues, 1-50 (MSTFPVLAEDIPLRERHVKGRVDPHFRAPKMEMFQRLLLLLLLSMGGTWA), serve as a signal peptide directing secretion. 6 disulfides stabilise this stretch: cysteine 59/cysteine 107, cysteine 73/cysteine 122, cysteine 76/cysteine 160, cysteine 84/cysteine 138, cysteine 88/cysteine 140, and cysteine 143/cysteine 150. N-linked (GlcNAc...) asparagine glycans are attached at residues asparagine 63 and asparagine 80. Positions 161-187 (DDPRFQDSSSSKAPPPSLPSPSRLPGP) are disordered. Over residues 173–187 (APPPSLPSPSRLPGP) the composition is skewed to pro residues.

Belongs to the glycoprotein hormones subunit beta family. In terms of tissue distribution, expressed in placenta, testis and pituitary.

It localises to the secreted. The polypeptide is Choriogonadotropin subunit beta variant 1 (CGB1) (Homo sapiens (Human)).